The primary structure comprises 381 residues: DNA primase DnaG (381 aa).

The Toprim domain maps to Asp173–Ile259. Residues Glu179, Asp221, and Asp223 each contribute to the Mg(2+) site.

This sequence belongs to the archaeal DnaG primase family. As to quaternary structure, forms a ternary complex with MCM helicase and DNA. Component of the archaeal exosome complex. Requires Mg(2+) as cofactor.

The enzyme catalyses ssDNA + n NTP = ssDNA/pppN(pN)n-1 hybrid + (n-1) diphosphate.. Its function is as follows. RNA polymerase that catalyzes the synthesis of short RNA molecules used as primers for DNA polymerase during DNA replication. Also part of the exosome, which is a complex involved in RNA degradation. Acts as a poly(A)-binding protein that enhances the interaction between heteromeric, adenine-rich transcripts and the exosome. In Methanothermobacter thermautotrophicus (strain ATCC 29096 / DSM 1053 / JCM 10044 / NBRC 100330 / Delta H) (Methanobacterium thermoautotrophicum), this protein is DNA primase DnaG.